The primary structure comprises 528 residues: Putative pumilio homolog 10 (528 aa).

The 341-residue stretch at 188-528 folds into the PUM-HD domain; sequence EGSGASYPDE…KIFSKTILKK (341 aa). 8 Pumilio repeats span residues 213 to 248, 249 to 284, 285 to 323, 325 to 360, 361 to 396, 397 to 433, 434 to 465, and 466 to 503; these read EIYGSVNLMARDQIGCRALQKLVEEGTVLDSKVIFL, EIIDHVVELSMDPLGNYIVQKLLVVSDEEQRTMIVS, VLTSKPRELIKICLNTNGTRVIQKMIKTVKTKQQIALVK, ALEPGFLVLVNDSNGYHVLQSCLEFLVPNDNKFVVE, AATEYCAQLATHQYGCYVLQCSLINTVGLQHERLVA, EISRDSLRLSQDPFGNYVVQCLIDQQVSSVNLLLPFR, THCIELATQKFSSHVIEKCLRKYPESRAEIVR, and ELLSYPNFEQLLQDPYANYVIQTALSVTKGAVRARLVE.

It is found in the cytoplasm. Sequence-specific RNA-binding protein that regulates translation and mRNA stability by binding the 3'-UTR of target mRNAs. The protein is Putative pumilio homolog 10 (APUM10) of Arabidopsis thaliana (Mouse-ear cress).